Here is a 420-residue protein sequence, read N- to C-terminus: Gamma-glutamyl phosphate reductase (420 aa).

This sequence belongs to the gamma-glutamyl phosphate reductase family.

Its subcellular location is the cytoplasm. The enzyme catalyses L-glutamate 5-semialdehyde + phosphate + NADP(+) = L-glutamyl 5-phosphate + NADPH + H(+). It functions in the pathway amino-acid biosynthesis; L-proline biosynthesis; L-glutamate 5-semialdehyde from L-glutamate: step 2/2. Catalyzes the NADPH-dependent reduction of L-glutamate 5-phosphate into L-glutamate 5-semialdehyde and phosphate. The product spontaneously undergoes cyclization to form 1-pyrroline-5-carboxylate. In Alkalilimnicola ehrlichii (strain ATCC BAA-1101 / DSM 17681 / MLHE-1), this protein is Gamma-glutamyl phosphate reductase.